The sequence spans 399 residues: Centrosomal protein 43 (399 aa).

Positions 70-102 constitute a LisH domain; the sequence is DGRLVASLVAEFLQFFNLDFTLAVFHPETSTIQ. Disordered regions lie at residues 142 to 216 and 236 to 311; these read PASV…SKSS and DARD…KRGS. Ser152 and Ser160 each carry phosphoserine. Residues 163 to 172 are compositionally biased toward polar residues; that stretch reads GKSSANSTPS. Thr170 is modified (phosphothreonine). The segment covering 175-186 has biased composition (basic residues); the sequence is PRYKGQGKKKTI. Positions 197–216 are enriched in low complexity; sequence SETSQSEPSVSLSESKSKSS. Ser202 carries the phosphoserine modification. Over residues 246-256 the composition is skewed to acidic residues; the sequence is DGDDVEGDSFF. Residues 259–275 are compositionally biased toward basic and acidic residues; it reads PIPKPEKTYGWRAEPRK. The span at 290–302 shows a compositional bias: low complexity; it reads RSGLSSLAGAPSL. Ser301 and Ser326 each carry phosphoserine. The segment at 328 to 354 is disordered; the sequence is GLGTGEDEDYADDFNSASHRSEKSELS. At Tyr337 the chain carries Phosphotyrosine.

It belongs to the CEP43 family. As to quaternary structure, homodimer. Part of a ternary complex that contains CEP350, CEP43 and MAPRE1. Interacts directly with CEP350 and MAPRE1. Interacts with CEP19. Interacts (via N-terminus) with CEP350 (via C-terminus).

The protein localises to the cytoplasm. It is found in the cytoskeleton. The protein resides in the microtubule organizing center. It localises to the centrosome. Its subcellular location is the centriole. The protein localises to the cilium basal body. Its function is as follows. Required for anchoring microtubules to the centrosomes. Required for ciliation. In Mus musculus (Mouse), this protein is Centrosomal protein 43.